A 259-amino-acid chain; its full sequence is 3-dehydroquinate dehydratase (259 aa).

3-dehydroquinate-binding positions include 50–52 (EWR) and arginine 86. Catalysis depends on histidine 147, which acts as the Proton donor/acceptor. Lysine 174 (schiff-base intermediate with substrate) is an active-site residue. Positions 216, 235, and 239 each coordinate 3-dehydroquinate.

It belongs to the type-I 3-dehydroquinase family. As to quaternary structure, homodimer.

It carries out the reaction 3-dehydroquinate = 3-dehydroshikimate + H2O. It participates in metabolic intermediate biosynthesis; chorismate biosynthesis; chorismate from D-erythrose 4-phosphate and phosphoenolpyruvate: step 3/7. Its function is as follows. Involved in the third step of the chorismate pathway, which leads to the biosynthesis of aromatic amino acids. Catalyzes the cis-dehydration of 3-dehydroquinate (DHQ) and introduces the first double bond of the aromatic ring to yield 3-dehydroshikimate. This chain is 3-dehydroquinate dehydratase, found in Geobacillus sp. (strain WCH70).